A 1038-amino-acid polypeptide reads, in one-letter code: Fibronectin-binding protein A (1038 aa).

The signal sequence occupies residues 1–36; that stretch reads MKNNLRYGIRKHKLGAASVFLGTMIVVGMGQDKEAA. A YSIRK-G/S signaling motif motif is present at residues 7-18; sequence YGIRKHKLGAAS. The segment at 37-193 is disordered; that stretch reads ASEQKTTTVE…VSEVKGTDVT (157 aa). Positions 37 to 507 are ligand-binding A region; sequence ASEQKTTTVE…SNKADGNGKN (471 aa). The span at 39–92 shows a compositional bias: polar residues; it reads EQKTTTVEENGNSATDNKTSETQTTATNVNHIEETQSYNATVTEQPSNATQVTT. The segment covering 112-121 has biased composition (basic and acidic residues); sequence TVKEEEKPQV. Positions 122–164 are enriched in polar residues; sequence KETTQPQDNSGNQRQVDLTPKKVTQNQGTETQVEVAQPRTASE. The segment covering 174-189 has biased composition (basic and acidic residues); it reads DVAEAKEASDVSEVKG. Positions 189–507 are fibrinogen/elastin/tropoelastin-binding; the sequence is GTDVTSKVTV…SNKADGNGKN (319 aa). Positions 508–868 are fibronectin-binding; that stretch reads GQIIQDNDFE…EGQQTIEEDT (361 aa). The B-1 repeat unit spans residues 541 to 570; it reads ENQDNTPLDIDYHTAIDGEGGYVDGYIETI. The tract at residues 541 to 600 is 2 X approximate tandem repeats; sequence ENQDNTPLDIDYHTAIDGEGGYVDGYIETIEETDSSAIDIDYHTAVDSEVGHVGGYTESS. The stretch at 571–600 is one B-2 repeat; that stretch reads EETDSSAIDIDYHTAVDSEVGHVGGYTESS. 3 disordered regions span residues 736-804, 825-976, and 989-1015; these read LGYE…GGNI, IEED…GKVV, and VAPT…NKGM. The D-1 repeat unit spans residues 741-778; the sequence is GQNSGNQSFEEDTEEDKPKYEQGGNIVDIDFDSVPQIH. Residues 741–898 form a 4 X approximate tandem repeats region; sequence GQNSGNQSFE…TPEVPSEPET (158 aa). A D-2 repeat occupies 779 to 816; sequence GQNKGDQSFEEDTEKDKPKYEHGGNIIDIDFDSVPQIH. A D-3 repeat occupies 817-855; that stretch reads GFNKHNEIIEEDTNKDKPNYQFGGHNSVDFEEDTLPKVS. Residues 825–834 are compositionally biased toward basic and acidic residues; it reads IEEDTNKDKP. The stretch at 856–898 is one D-4 repeat; that stretch reads GQNEGQQTIEEDTTPPTPPTPEVPSEPETPMPPTPEVPSEPET. Over residues 870-958 the composition is skewed to pro residues; the sequence is PPTPPTPEVP…PAEPGKPVPP (89 aa). 5 WR repeats span residues 899–912, 913–926, 927–940, 941–954, and 955–968; these read PTPP…EPET, PTPP…EPGK, and PVPP…KPSK. Positions 899–968 are 5 X tandem repeats, Pro-rich (WR); that stretch reads PTPPTPEVPS…AKEEPKKPSK (70 aa). The LPXTG sorting signal motif lies at 1002–1006; the sequence is LPETG. Position 1005 is a pentaglycyl murein peptidoglycan amidated threonine (Thr-1005). Positions 1006 to 1038 are cleaved as a propeptide — removed by sortase; that stretch reads GGEESTNKGMLFGGLFSILGLALLRRNKKNNKA.

The protein localises to the secreted. It localises to the cell wall. Its function is as follows. Promotes bacterial attachment to multiple substrates, such as fibronectin (Fn), fibrinogen (Fg), elastin peptides and tropoelastin. This confers to S.aureus the ability to invade endothelial cells. Promotes adherence to and aggregation of activated platelets. This chain is Fibronectin-binding protein A (fnbA), found in Staphylococcus aureus (strain Mu50 / ATCC 700699).